The sequence spans 201 residues: MKFSPLVQELIDSLKCLPGVGAKSAQRMAFQLLERNRRGGSKLANTLAKAMTDIGHCQQCRNFTEEALCEICQSPKRQLSTTLCIVETPGDVIAIEQTGEFFGKYFVLMGHLSPIDGIGPDDLGLDILAKQFATGQFSEVILATNPTVEGEATAHFIAELAQQHQVNISRIAHGVPVGGELEYVDGNTLSHALSGRKSYQI.

Residues 57–72 form a C4-type zinc finger; it reads CQQCRNFTEEALCEIC. The Toprim domain occupies 81 to 176; that stretch reads TTLCIVETPG…NISRIAHGVP (96 aa).

It belongs to the RecR family.

May play a role in DNA repair. It seems to be involved in an RecBC-independent recombinational process of DNA repair. It may act with RecF and RecO. The polypeptide is Recombination protein RecR (Colwellia psychrerythraea (strain 34H / ATCC BAA-681) (Vibrio psychroerythus)).